The chain runs to 200 residues: DNA-binding protein HupB (200 aa).

A bacterial histone-like domain region spans residues 1-90 (MNKAELIDVL…PGAQFKAVVA (90 aa)). An N6-acetyllysine mark is found at lysine 3, lysine 72, lysine 86, lysine 103, lysine 137, lysine 144, and lysine 156. The tract at residues 101-200 (AVKRGVATSA…KVTAAKRGRK (100 aa)) is degenerate repeats region. A disordered region spans residues 179–200 (AKKAAVKKAPAKKVTAAKRGRK).

Belongs to the bacterial histone-like protein family. Long actinobacterial subfamily. Binds to human laminin-2. May also be methylated and possibly phosphorylated in vivo.

The protein resides in the cytoplasm. Its subcellular location is the nucleoid. The protein localises to the secreted. It is found in the cell wall. It localises to the cell surface. The enzyme catalyses 4 Fe(2+) + O2 + 4 H(+) = 4 Fe(3+) + 2 H2O. A nucleoid-associated protein (NAP) that plays a role in local chromosome architecture and chromosome compactation. Required for biofilm formation, stress survival and possibly in cell wall assembly, probably influences transcription. RNase E and HupB jointly contribute to cellular adaptation to changing growth conditions and survival during antibiotic treatment and in the host. Functionally, binds Fe(3+) but not Fe(2+). Has ferroxidase activity, converts Fe(2+) into Fe(3+) and in the presence of H(2)O(2) prevents the generation of hydroxyl radicals (the Fenton reaction). Protects DNA from damage in the presence of FeSO(4) and H(2)O(2). May function in iron storage. Its function is as follows. May be involved in entry into human Schwann cells. The protein is DNA-binding protein HupB of Mycobacterium leprae (strain TN).